The chain runs to 103 residues: Co-chaperonin GroES (103 aa).

This sequence belongs to the GroES chaperonin family. Heptamer of 7 subunits arranged in a ring. Interacts with the chaperonin GroEL.

The protein resides in the cytoplasm. Its function is as follows. Together with the chaperonin GroEL, plays an essential role in assisting protein folding. The GroEL-GroES system forms a nano-cage that allows encapsulation of the non-native substrate proteins and provides a physical environment optimized to promote and accelerate protein folding. GroES binds to the apical surface of the GroEL ring, thereby capping the opening of the GroEL channel. This Synechocystis sp. (strain ATCC 27184 / PCC 6803 / Kazusa) protein is Co-chaperonin GroES.